The primary structure comprises 171 residues: Putative phosphoesterase ABC1741 (171 aa).

The active-site Proton donor is the His-34. Short sequence motifs (HXTX) lie at residues 34-37 (HITL) and 116-119 (HITI). The active-site Proton acceptor is His-116.

Belongs to the 2H phosphoesterase superfamily. YjcG family.

The chain is Putative phosphoesterase ABC1741 from Shouchella clausii (strain KSM-K16) (Alkalihalobacillus clausii).